Consider the following 339-residue polypeptide: Serpentine receptor class delta-19 (339 aa).

A run of 7 helical transmembrane segments spans residues 2 to 22 (IIFF…LNLL), 39 to 59 (ATLI…DLFI), 90 to 110 (VGLS…LISF), 130 to 150 (ITIM…TLFV), 187 to 207 (VYAV…IFVL), 242 to 262 (IIPM…SGLL), and 270 to 290 (SIFS…LYFV).

The protein belongs to the nematode receptor-like protein srd family.

Its subcellular location is the membrane. This Caenorhabditis elegans protein is Serpentine receptor class delta-19 (srd-19).